Consider the following 139-residue polypeptide: uncharacterized protein (139 aa).

This is an uncharacterized protein from Sputnik virophage.